We begin with the raw amino-acid sequence, 315 residues long: MTIDSGFNHITVLLDEAVEALAVRPDGCYLDGTFGRGGHSRLILSKLGPDGRLIGFDKDPQAIATGQTLAAEDGRFVVVQRSFAELGSVVAERGLTGKVSGILLDLGVSSPQLDDAERGFSFLNDGPLDMRMDPSRGISAAEFVNTAPVEEIARVFKEYGEERFSGRMARAVVERRDVTPFERTADLAEVLKVANPAWEKGKNPATRAFQGLRIQVNNELGDLEAGLEAALECLEVGGRLVVISFHSLEDRIVKLFMRKLVKGEADNLPRNLPVRHVAFEPKIKVHGKAQTASDAELKANPRSRSAVMRVAEKLR.

Residues 37 to 39 (GGH), Asp-57, Phe-83, Asp-105, and Gln-112 contribute to the S-adenosyl-L-methionine site.

Belongs to the methyltransferase superfamily. RsmH family.

Its subcellular location is the cytoplasm. It catalyses the reaction cytidine(1402) in 16S rRNA + S-adenosyl-L-methionine = N(4)-methylcytidine(1402) in 16S rRNA + S-adenosyl-L-homocysteine + H(+). Specifically methylates the N4 position of cytidine in position 1402 (C1402) of 16S rRNA. This is Ribosomal RNA small subunit methyltransferase H from Pseudomonas fluorescens (strain Pf0-1).